The sequence spans 89 residues: DNA maturase A (89 aa).

In terms of assembly, gp18 and gp19 associate with DNA and prohead.

Its function is as follows. During the growth of this phage, DNA is synthesized as concatemers. During DNA packaging mature monomers are cut from the concatemers. This is DNA maturase A (18) from Enterobacteria phage T3 (Bacteriophage T3).